A 244-amino-acid polypeptide reads, in one-letter code: Phosphoadenosine 5'-phosphosulfate reductase (244 aa).

Cysteine 239 (nucleophile; cysteine thiosulfonate intermediate) is an active-site residue.

This sequence belongs to the PAPS reductase family. CysH subfamily.

The protein localises to the cytoplasm. The enzyme catalyses [thioredoxin]-disulfide + sulfite + adenosine 3',5'-bisphosphate + 2 H(+) = [thioredoxin]-dithiol + 3'-phosphoadenylyl sulfate. It functions in the pathway sulfur metabolism; hydrogen sulfide biosynthesis; sulfite from sulfate: step 3/3. In terms of biological role, catalyzes the formation of sulfite from phosphoadenosine 5'-phosphosulfate (PAPS) using thioredoxin as an electron donor. The sequence is that of Phosphoadenosine 5'-phosphosulfate reductase from Salmonella arizonae (strain ATCC BAA-731 / CDC346-86 / RSK2980).